The chain runs to 261 residues: MAGPELLLDSNIRLWVVLPIVIITFFVGMIRHYVSILLQSDKKLTQEQVSDSQVLIRSRVLRENGKYIPKQSFLTRKYYFNNPEDGFFKKTKRKVVPPSPMTDPTMLTDMMKGNVTNVLPMILIGGWINMTFSGFVTTKVPFPLTLRFKPMLQQGIELLTLDASWVSSASWYFLNVFGLRSIYSLILGQDNAADQSRMMQEQMTGAAMAMPADTNKAFKTEWEALELTDHQWALDDVEEELMARDLHFEGMFKKELQTSIF.

At 2 to 14 (AGPELLLDSNIRL) the chain is on the lumenal side. A helical transmembrane segment spans residues 15-38 (WVVLPIVIITFFVGMIRHYVSILL). Topologically, residues 39-114 (QSDKKLTQEQ…TMLTDMMKGN (76 aa)) are cytoplasmic. A helical membrane pass occupies residues 115–130 (VTNVLPMILIGGWINM). Over 131 to 168 (TFSGFVTTKVPFPLTLRFKPMLQQGIELLTLDASWVSS) the chain is Lumenal. The helical transmembrane segment at 169–187 (ASWYFLNVFGLRSIYSLIL) threads the bilayer. The Cytoplasmic portion of the chain corresponds to 188-261 (GQDNAADQSR…FKKELQTSIF (74 aa)).

Belongs to the EMC3 family. Component of the ER membrane protein complex (EMC).

The protein resides in the endoplasmic reticulum membrane. Part of the endoplasmic reticulum membrane protein complex (EMC) that enables the energy-independent insertion into endoplasmic reticulum membranes of newly synthesized membrane proteins. Preferentially accommodates proteins with transmembrane domains that are weakly hydrophobic or contain destabilizing features such as charged and aromatic residues. Involved in the cotranslational insertion of multi-pass membrane proteins in which stop-transfer membrane-anchor sequences become ER membrane spanning helices. It is also required for the post-translational insertion of tail-anchored/TA proteins in endoplasmic reticulum membranes. By mediating the proper cotranslational insertion of N-terminal transmembrane domains in an N-exo topology, with translocated N-terminus in the lumen of the ER, controls the topology of multi-pass membrane proteins like the G protein-coupled receptors. By regulating the insertion of various proteins in membranes, it is indirectly involved in many cellular processes. The chain is ER membrane protein complex subunit 3 (Emc3) from Rattus norvegicus (Rat).